The sequence spans 162 residues: Large ribosomal subunit protein uL15 (162 aa).

The span at 1–13 (MKLNEIRDNEGAT) shows a compositional bias: basic and acidic residues. Positions 1-37 (MKLNEIRDNEGATKNRMRVGRGIGSGKGKTAGRGVKG) are disordered. The span at 21-35 (RGIGSGKGKTAGRGV) shows a compositional bias: gly residues.

Belongs to the universal ribosomal protein uL15 family. Part of the 50S ribosomal subunit.

In terms of biological role, binds to the 23S rRNA. In Methylobacterium nodulans (strain LMG 21967 / CNCM I-2342 / ORS 2060), this protein is Large ribosomal subunit protein uL15.